We begin with the raw amino-acid sequence, 224 residues long: UPF0758 protein Lm4b_01560 (224 aa).

The region spanning 102–224 is the MPN domain; the sequence is VVRCPEDAVK…YISLKEKGYF (123 aa). Positions 173, 175, and 186 each coordinate Zn(2+). The JAMM motif motif lies at 173 to 186; sequence HNHPSGDPTPSSED.

This sequence belongs to the UPF0758 family.

The polypeptide is UPF0758 protein Lm4b_01560 (Listeria monocytogenes serotype 4b (strain CLIP80459)).